A 335-amino-acid polypeptide reads, in one-letter code: Tetraacyldisaccharide 4'-kinase (335 aa).

58-65 (TVGGSGKT) lines the ATP pocket.

Belongs to the LpxK family.

The catalysed reaction is a lipid A disaccharide + ATP = a lipid IVA + ADP + H(+). It participates in glycolipid biosynthesis; lipid IV(A) biosynthesis; lipid IV(A) from (3R)-3-hydroxytetradecanoyl-[acyl-carrier-protein] and UDP-N-acetyl-alpha-D-glucosamine: step 6/6. In terms of biological role, transfers the gamma-phosphate of ATP to the 4'-position of a tetraacyldisaccharide 1-phosphate intermediate (termed DS-1-P) to form tetraacyldisaccharide 1,4'-bis-phosphate (lipid IVA). This chain is Tetraacyldisaccharide 4'-kinase, found in Shewanella sp. (strain ANA-3).